Here is a 649-residue protein sequence, read N- to C-terminus: Alpha-amylase (649 aa).

E124 functions as the Nucleophile in the catalytic mechanism. Catalysis depends on D215, which acts as the Proton donor.

The protein belongs to the glycosyl hydrolase 57 family. As to quaternary structure, homodimer.

The catalysed reaction is Endohydrolysis of (1-&gt;4)-alpha-D-glucosidic linkages in polysaccharides containing three or more (1-&gt;4)-alpha-linked D-glucose units.. Its function is as follows. Displays a broad range of substrate specificity, with the capacity to hydrolyze carbohydrates as simple as maltotriose. The protein is Alpha-amylase (amyA) of Pyrococcus furiosus (strain ATCC 43587 / DSM 3638 / JCM 8422 / Vc1).